The primary structure comprises 127 residues: Fluoride-specific ion channel FluC (127 aa).

A run of 4 helical transmembrane segments spans residues 7–27 (LILI…MGLI), 37–57 (FGTL…MAMI), 69–89 (LFMI…SAEV), and 102–122 (LGIM…GVLI). Gly77 and Thr80 together coordinate Na(+).

It belongs to the fluoride channel Fluc/FEX (TC 1.A.43) family.

The protein resides in the cell inner membrane. It carries out the reaction fluoride(in) = fluoride(out). Its activity is regulated as follows. Na(+) is not transported, but it plays an essential structural role and its presence is essential for fluoride channel function. Fluoride-specific ion channel. Important for reducing fluoride concentration in the cell, thus reducing its toxicity. The protein is Fluoride-specific ion channel FluC of Mannheimia succiniciproducens (strain KCTC 0769BP / MBEL55E).